A 499-amino-acid chain; its full sequence is Cytochrome P450 monooxygenase ausI (499 aa).

The helical transmembrane segment at 10 to 30 (PLGQPLIAGFVVVSAVLYLLY) threads the bilayer. Residue Cys-439 coordinates heme. Asn-483 is a glycosylation site (N-linked (GlcNAc...) asparagine).

This sequence belongs to the cytochrome P450 family. Heme is required as a cofactor.

It is found in the membrane. It functions in the pathway secondary metabolite biosynthesis; terpenoid biosynthesis. Cytochrome P450 monooxygenase; part of the gene cluster B that mediates the biosynthesis of austinol and dehydroaustinol, two fungal meroterpenoids. The first step of the pathway is the synthesis of 3,5-dimethylorsellinic acid by the polyketide synthase ausA. 3,5-dimethylorsellinic acid is then prenylated by the polyprenyl transferase ausN. Further epoxidation by the FAD-dependent monooxygenase ausM and cyclization by the probable terpene cyclase ausL lead to the formation of protoaustinoid A. Protoaustinoid A is then oxidized to spiro-lactone preaustinoid A3 by the combined action of the FAD-binding monooxygenases ausB and ausC, and the dioxygenase ausE. Acid-catalyzed keto-rearrangement and ring contraction of the tetraketide portion of preaustinoid A3 by ausJ lead to the formation of preaustinoid A4. The aldo-keto reductase ausK, with the help of ausH, is involved in the next step by transforming preaustinoid A4 into isoaustinone which is in turn hydroxylated by the P450 monooxygenase ausI to form austinolide. Finally, the cytochrome P450 monooxygenase ausG modifies austinolide to austinol. Austinol can be further modified to dehydroaustinol which forms a diffusible complex with diorcinol that initiates conidiation. Due to genetic rearrangements of the clusters and the subsequent loss of some enzymes, the end products of the Emericella nidulans austinoid biosynthesis clusters are austinol and dehydroaustinol, even if additional enzymes, such as the O-acetyltransferase ausQ and the cytochrome P450 monooxygenase ausR are still functional. The polypeptide is Cytochrome P450 monooxygenase ausI (Emericella nidulans (strain FGSC A4 / ATCC 38163 / CBS 112.46 / NRRL 194 / M139) (Aspergillus nidulans)).